The primary structure comprises 173 residues: 6,7-dimethyl-8-ribityllumazine synthase (173 aa).

5-amino-6-(D-ribitylamino)uracil is bound by residues Tyr-34, 65 to 67, and 94 to 96; these read ALE and CVI. 99–100 is a binding site for (2S)-2-hydroxy-3-oxobutyl phosphate; sequence ET. The active-site Proton donor is His-102. Asn-127 serves as a coordination point for 5-amino-6-(D-ribitylamino)uracil. Arg-141 serves as a coordination point for (2S)-2-hydroxy-3-oxobutyl phosphate.

Belongs to the DMRL synthase family.

The catalysed reaction is (2S)-2-hydroxy-3-oxobutyl phosphate + 5-amino-6-(D-ribitylamino)uracil = 6,7-dimethyl-8-(1-D-ribityl)lumazine + phosphate + 2 H2O + H(+). Its pathway is cofactor biosynthesis; riboflavin biosynthesis; riboflavin from 2-hydroxy-3-oxobutyl phosphate and 5-amino-6-(D-ribitylamino)uracil: step 1/2. Catalyzes the formation of 6,7-dimethyl-8-ribityllumazine by condensation of 5-amino-6-(D-ribitylamino)uracil with 3,4-dihydroxy-2-butanone 4-phosphate. This is the penultimate step in the biosynthesis of riboflavin. The chain is 6,7-dimethyl-8-ribityllumazine synthase from Methylorubrum extorquens (strain CM4 / NCIMB 13688) (Methylobacterium extorquens).